The following is a 227-amino-acid chain: Cytidylate kinase (227 aa).

12 to 20 (GPSGAGKGT) is a binding site for ATP.

The protein belongs to the cytidylate kinase family. Type 1 subfamily.

The protein resides in the cytoplasm. The enzyme catalyses CMP + ATP = CDP + ADP. It carries out the reaction dCMP + ATP = dCDP + ADP. The chain is Cytidylate kinase from Shigella boydii serotype 18 (strain CDC 3083-94 / BS512).